A 77-amino-acid polypeptide reads, in one-letter code: uncharacterized protein (77 aa).

In terms of domain architecture, Inhibitor I9 spans 5–74 (SYIVQLKDSV…FEPDQEMHTM (70 aa)).

It belongs to the protease inhibitor I9 family.

The protein localises to the cytoplasm. The protein resides in the nucleus. This is an uncharacterized protein from Schizosaccharomyces pombe (strain 972 / ATCC 24843) (Fission yeast).